Consider the following 510-residue polypeptide: Insulinoma-associated protein 1 (510 aa).

Over residues 1 to 12 (MPRGFLVKRSKK) the composition is skewed to basic residues. An SNAG domain region spans residues 1–20 (MPRGFLVKRSKKSTPVSYRV). 2 disordered regions span residues 1-110 (MPRG…SREH) and 176-226 (GAEA…PKAI). The required and sufficient for interaction with KDM1A stretch occupies residues 2–7 (PRGFLV). Positions 43–58 (PPAPSPVPGPLPPPPP) are necessary for interaction with CCND1. The span at 43–59 (PPAPSPVPGPLPPPPPA) shows a compositional bias: pro residues. 2 stretches are compositionally biased toward low complexity: residues 64 to 74 (AALAAALACAP) and 209 to 218 (EPPAKAVKAP). The C2H2-type 1; atypical zinc-finger motif lies at 267 to 287 (FICQLCKEEYADPFALAQHKC). The C2H2-type 2 zinc-finger motif lies at 295–317 (YRCPECAKVFSCPANLASHRRWH). A disordered region spans residues 315-362 (RWHKPRPAPAAARAPEPEAAARAEAREAPGGGSDRDTPSPGGVSESGS). A compositionally biased stretch (basic and acidic residues) spans 329–351 (PEPEAAARAEAREAPGGGSDRDT). C2H2-type zinc fingers lie at residues 367-389 (YECHHCAKKFRRQAYLRKHLLAH), 441-464 (HLCPVCGESFASKGAQERHLRLLH), and 469-492 (FPCKYCPATFYSSPGLTRHINKCH).

Belongs to the INSM1 family. As to quaternary structure, interacts (via the SNAG domain) with HDAC1. Interacts (via the SNAG domain) with HDAC2. Interacts (via the SNAG domain) with KDM1A. Interacts (via the SNAG domain) with RCOR1. Interacts with SORBS1. Interacts (via the N-terminal region) with CCND1 (via cyclin N-terminal domain); the interaction competes with the binding of CCND1 to CDK4 during cell cycle progression and increases its transcriptional repressor activity. Interacts with HDAC3; the interaction increases its transcriptional repressor activity. As to expression, expressed in pancreatic duct cells. Expressed in several tumor cell lines of neuroendocrine origin including pheochromocytoma, medullary thyroid carcinoma, insulinoma, medulloblastoma, retinoblastoma, pheochromacytoma, medullary thyroid carcinoma and small cell lung carcinoma.

It is found in the nucleus. Its function is as follows. Sequence-specific DNA-binding transcriptional regulator that plays a key role in neurogenesis and neuroendocrine cell differentiation during embryonic and/or fetal development. Binds to the consensus sequence 5'-[TG][TC][TC][TT][GA]GGG[CG]A-3' in target promoters. Acts as a transcriptional repressor of NEUROD1 and INS expression via its interaction with cyclin CCND1 in a cell cycle-independent manner. Negatively regulates skeletal muscle-specific gene expression in endocrine cells of the pituitary by inhibiting the Notch signaling pathway. Represses target gene transcription by recruiting chromatin-modifying factors, such as HDAC1, HDAC2, HDAC3, KDM1A and RCOR1 histone deacetylases. Binds to its own promoter, suggesting autoregulation as a self-control feedback mechanism. Competes with histone H3 for the same binding site on the histone demethylase complex formed by KDM1A and RCOR1, and thereby inhibits demethylation of histone H3 at 'Lys-4'. Promotes the generation and expansion of neuronal basal progenitor cells in the developing neocortex. Involved in the differentiation of endocrine cells of the developing anterior pituitary gland, of the pancreas and intestine, and of sympatho-adrenal cells in the peripheral nervous system. Promotes cell cycle signaling arrest and inhibition of cellular proliferation. In Homo sapiens (Human), this protein is Insulinoma-associated protein 1 (INSM1).